The following is a 444-amino-acid chain: Probable glycine dehydrogenase (decarboxylating) subunit 1 (444 aa).

This sequence belongs to the GcvP family. N-terminal subunit subfamily. In terms of assembly, the glycine cleavage system is composed of four proteins: P, T, L and H. In this organism, the P 'protein' is a heterodimer of two subunits.

It catalyses the reaction N(6)-[(R)-lipoyl]-L-lysyl-[glycine-cleavage complex H protein] + glycine + H(+) = N(6)-[(R)-S(8)-aminomethyldihydrolipoyl]-L-lysyl-[glycine-cleavage complex H protein] + CO2. Functionally, the glycine cleavage system catalyzes the degradation of glycine. The P protein binds the alpha-amino group of glycine through its pyridoxal phosphate cofactor; CO(2) is released and the remaining methylamine moiety is then transferred to the lipoamide cofactor of the H protein. This chain is Probable glycine dehydrogenase (decarboxylating) subunit 1, found in Chlorobaculum parvum (strain DSM 263 / NCIMB 8327) (Chlorobium vibrioforme subsp. thiosulfatophilum).